Here is a 330-residue protein sequence, read N- to C-terminus: Methionyl-tRNA formyltransferase (330 aa).

Residue 116-119 (SLLP) participates in (6S)-5,6,7,8-tetrahydrofolate binding.

It belongs to the Fmt family.

The catalysed reaction is L-methionyl-tRNA(fMet) + (6R)-10-formyltetrahydrofolate = N-formyl-L-methionyl-tRNA(fMet) + (6S)-5,6,7,8-tetrahydrofolate + H(+). Functionally, attaches a formyl group to the free amino group of methionyl-tRNA(fMet). The formyl group appears to play a dual role in the initiator identity of N-formylmethionyl-tRNA by promoting its recognition by IF2 and preventing the misappropriation of this tRNA by the elongation apparatus. The protein is Methionyl-tRNA formyltransferase of Nitratidesulfovibrio vulgaris (strain ATCC 29579 / DSM 644 / CCUG 34227 / NCIMB 8303 / VKM B-1760 / Hildenborough) (Desulfovibrio vulgaris).